The chain runs to 480 residues: ATP synthase subunit beta (480 aa).

Residue glycine 154–threonine 161 participates in ATP binding.

The protein belongs to the ATPase alpha/beta chains family. As to quaternary structure, F-type ATPases have 2 components, CF(1) - the catalytic core - and CF(0) - the membrane proton channel. CF(1) has five subunits: alpha(3), beta(3), gamma(1), delta(1), epsilon(1). CF(0) has four main subunits: a(1), b(1), b'(1) and c(9-12).

The protein localises to the cell inner membrane. The enzyme catalyses ATP + H2O + 4 H(+)(in) = ADP + phosphate + 5 H(+)(out). In terms of biological role, produces ATP from ADP in the presence of a proton gradient across the membrane. The catalytic sites are hosted primarily by the beta subunits. The chain is ATP synthase subunit beta from Bradyrhizobium sp. (strain ORS 278).